The primary structure comprises 66 residues: Large ribosomal subunit protein bL31 (66 aa).

Positions 16, 18, 36, and 39 each coordinate Zn(2+).

Belongs to the bacterial ribosomal protein bL31 family. Type A subfamily. Part of the 50S ribosomal subunit. The cofactor is Zn(2+).

Functionally, binds the 23S rRNA. The chain is Large ribosomal subunit protein bL31 from Natranaerobius thermophilus (strain ATCC BAA-1301 / DSM 18059 / JW/NM-WN-LF).